A 432-amino-acid polypeptide reads, in one-letter code: Adenylosuccinate synthetase (432 aa).

GTP is bound by residues 12–18 (GDEGKGK) and 40–42 (GHT). Residue D13 is the Proton acceptor of the active site. Positions 13 and 40 each coordinate Mg(2+). IMP is bound by residues 13–16 (DEGK), 38–41 (NAGH), T130, R144, Q225, T240, and R304. Catalysis depends on H41, which acts as the Proton donor. 300–306 (ATTGRRR) provides a ligand contact to substrate. GTP-binding positions include R306, 332-334 (KLD), and 415-417 (SVG).

It belongs to the adenylosuccinate synthetase family. Homodimer. Mg(2+) serves as cofactor.

Its subcellular location is the cytoplasm. It catalyses the reaction IMP + L-aspartate + GTP = N(6)-(1,2-dicarboxyethyl)-AMP + GDP + phosphate + 2 H(+). Its pathway is purine metabolism; AMP biosynthesis via de novo pathway; AMP from IMP: step 1/2. Functionally, plays an important role in the de novo pathway of purine nucleotide biosynthesis. Catalyzes the first committed step in the biosynthesis of AMP from IMP. The protein is Adenylosuccinate synthetase of Syntrophus aciditrophicus (strain SB).